A 279-amino-acid polypeptide reads, in one-letter code: Presqualene diphosphate synthase (279 aa).

This sequence belongs to the phytoene/squalene synthase family. HpnD subfamily.

The catalysed reaction is 2 (2E,6E)-farnesyl diphosphate = presqualene diphosphate + diphosphate. It functions in the pathway secondary metabolite biosynthesis; hopanoid biosynthesis. Its function is as follows. Involved in the biosynthesis of the hopanoid precursor squalene (SQ) from farnesyl diphosphate (FPP). Catalyzes the first step, the formation of presqualene diphosphate (PSPP) from two molecules of FPP. This Rhodopseudomonas palustris (strain ATCC BAA-98 / CGA009) protein is Presqualene diphosphate synthase.